We begin with the raw amino-acid sequence, 306 residues long: Probable rRNA-processing protein EBP2 (306 aa).

Methionine 1 is subject to N-acetylmethionine. 3 disordered regions span residues 1 to 20 (MDTP…LASD), 75 to 103 (GPVP…DDFQ), and 150 to 169 (IRQK…KAKQ). Threonine 3 bears the Phosphothreonine mark. Serine 7, serine 9, serine 11, and serine 13 each carry phosphoserine. Residues 81–90 (SETQPTPQNQ) are compositionally biased toward polar residues. The span at 91–103 (DQKKGVNPEDDFQ) shows a compositional bias: basic and acidic residues. A Glycyl lysine isopeptide (Lys-Gly) (interchain with G-Cter in SUMO2) cross-link involves residue lysine 93. Residues 135–171 (DYFAEMAKSDQQMQKIRQKLQTKQAAMEKSEKAKQLR) are a coiled coil. Glycyl lysine isopeptide (Lys-Gly) (interchain with G-Cter in SUMO2) cross-links involve residues lysine 179 and lysine 218. Residues 213-224 (LEGDQKPVERSA) are compositionally biased toward basic and acidic residues. The tract at residues 213–306 (LEGDQKPVER…ARQKLKSKAR (94 aa)) is disordered. A phosphoserine mark is found at serine 264 and serine 270. Over residues 274–306 (KVAHGKGSRRPGKKGANKRPGKRARQKLKSKAR) the composition is skewed to basic residues.

It belongs to the EBP2 family. As to quaternary structure, interacts with WDR46.

It is found in the nucleus. The protein resides in the nucleolus. Required for the processing of the 27S pre-rRNA. The chain is Probable rRNA-processing protein EBP2 (Ebna1bp2) from Mus musculus (Mouse).